A 506-amino-acid chain; its full sequence is D-alanine--D-alanyl carrier protein ligase (506 aa).

152–153 provides a ligand contact to ATP; the sequence is TS. Aspartate 197 lines the D-alanine pocket. 292 to 297 contacts ATP; the sequence is NTYGPT. A D-alanine-binding site is contributed by valine 301. Residues aspartate 383, 395–398, and lysine 494 each bind ATP; that span reads YRGR. A D-alanine-binding site is contributed by lysine 494.

This sequence belongs to the ATP-dependent AMP-binding enzyme family. DltA subfamily.

Its subcellular location is the cytoplasm. The catalysed reaction is holo-[D-alanyl-carrier protein] + D-alanine + ATP = D-alanyl-[D-alanyl-carrier protein] + AMP + diphosphate. It functions in the pathway cell wall biogenesis; lipoteichoic acid biosynthesis. Catalyzes the first step in the D-alanylation of lipoteichoic acid (LTA), the activation of D-alanine and its transfer onto the D-alanyl carrier protein (Dcp) DltC. In an ATP-dependent two-step reaction, forms a high energy D-alanyl-AMP intermediate, followed by transfer of the D-alanyl residue as a thiol ester to the phosphopantheinyl prosthetic group of the Dcp. D-alanylation of LTA plays an important role in modulating the properties of the cell wall in Gram-positive bacteria, influencing the net charge of the cell wall. This chain is D-alanine--D-alanyl carrier protein ligase, found in Lacticaseibacillus casei (strain BL23) (Lactobacillus casei).